The primary structure comprises 192 residues: uncharacterized protein (192 aa).

The protein resides in the virion. This is an uncharacterized protein from Acanthamoeba polyphaga mimivirus (APMV).